We begin with the raw amino-acid sequence, 215 residues long: 3-isopropylmalate dehydratase small subunit (215 aa).

It belongs to the LeuD family. LeuD type 1 subfamily. Heterodimer of LeuC and LeuD.

It catalyses the reaction (2R,3S)-3-isopropylmalate = (2S)-2-isopropylmalate. It functions in the pathway amino-acid biosynthesis; L-leucine biosynthesis; L-leucine from 3-methyl-2-oxobutanoate: step 2/4. Its function is as follows. Catalyzes the isomerization between 2-isopropylmalate and 3-isopropylmalate, via the formation of 2-isopropylmaleate. This is 3-isopropylmalate dehydratase small subunit from Polynucleobacter necessarius subsp. necessarius (strain STIR1).